Here is a 787-residue protein sequence, read N- to C-terminus: Pleckstrin homology domain-containing family G member 6 (787 aa).

The DH domain occupies 161–353; that stretch reads HQQEALWELL…ESFLRHINGQ (193 aa). The PH domain occupies 409-509; sequence QLLLEGPVRV…WLEKTQHAQT (101 aa). The tract at residues 533 to 762 is disordered; sequence QGTESPSTRP…EPGNGKPRRL (230 aa). Residues 535–557 are compositionally biased toward low complexity; it reads TESPSTRPSTPSPSPEDSQSSAE. The span at 724-742 shows a compositional bias: basic and acidic residues; sequence LRPRSLREDMLREIREELA.

In terms of assembly, interacts with MYH10. Interacts with ELMO1 and EZR (in an open conformation). Interacts with CSPP1.

The protein resides in the cell projection. The protein localises to the microvillus. Its subcellular location is the cytoplasm. It is found in the cytoskeleton. It localises to the spindle. The protein resides in the cleavage furrow. Its function is as follows. Guanine nucleotide exchange factor activating the small GTPase RHOA, which, in turn, induces myosin filament formation. Also activates RHOG. Does not activate RAC1, or to a much lower extent than RHOA and RHOG. Part of a functional unit, involving PLEKHG6, MYH10 and RHOA, at the cleavage furrow to advance furrow ingression during cytokinesis. In epithelial cells, required for the formation of microvilli and membrane ruffles on the apical pole. Along with EZR, required for normal macropinocytosis. This chain is Pleckstrin homology domain-containing family G member 6 (Plekhg6), found in Mus musculus (Mouse).